Reading from the N-terminus, the 430-residue chain is Agropine synthesis reductase (430 aa).

203–227 (LISGPSRGIGKAIAENLIAHGYRMS) serves as a coordination point for NAD(+). Residue Ser-333 coordinates substrate. The active-site Proton acceptor is Tyr-346.

It belongs to the short-chain dehydrogenases/reductases (SDR) family.

The protein operates within opine metabolism; mannopine biosynthesis. Functionally, reduces deoxy-fructosyl-glutamine to mannopine. This Rhizobium rhizogenes (Agrobacterium rhizogenes) protein is Agropine synthesis reductase (mas1).